A 680-amino-acid chain; its full sequence is Potassium-transporting ATPase ATP-binding subunit (680 aa).

The next 4 membrane-spanning stretches (helical) occupy residues Val-37–Ala-57, Ile-69–Gly-89, Ile-223–Ala-243, and Ala-257–Ala-277. Residue Asp-307 is the 4-aspartylphosphate intermediate of the active site. ATP contacts are provided by residues Asp-344, Glu-348, Phe-375–Ser-382, and Lys-393. Asp-516 and Asp-520 together coordinate Mg(2+). Helical transmembrane passes span Phe-586–Met-606, Ala-614–Leu-634, and Leu-652–Leu-672.

Belongs to the cation transport ATPase (P-type) (TC 3.A.3) family. Type IA subfamily. In terms of assembly, the system is composed of three essential subunits: KdpA, KdpB and KdpC.

Its subcellular location is the cell inner membrane. The enzyme catalyses K(+)(out) + ATP + H2O = K(+)(in) + ADP + phosphate + H(+). Its function is as follows. Part of the high-affinity ATP-driven potassium transport (or Kdp) system, which catalyzes the hydrolysis of ATP coupled with the electrogenic transport of potassium into the cytoplasm. This subunit is responsible for energy coupling to the transport system and for the release of the potassium ions to the cytoplasm. The chain is Potassium-transporting ATPase ATP-binding subunit from Rhizobium meliloti (strain 1021) (Ensifer meliloti).